We begin with the raw amino-acid sequence, 189 residues long: UPF0149 protein VF_2102 (189 aa).

It belongs to the UPF0149 family.

The protein is UPF0149 protein VF_2102 of Aliivibrio fischeri (strain ATCC 700601 / ES114) (Vibrio fischeri).